The chain runs to 514 residues: Beta-glucosidase 21 (514 aa).

A signal peptide spans 1–25 (MERPLHLLLVFLSSPWLLLLQGVSS). Residues Gln-47 and His-147 each coordinate a beta-D-glucoside. The Proton donor role is filled by Glu-193. A disulfide bridge connects residues Cys-212 and Cys-220. 2 N-linked (GlcNAc...) asparagine glycosylation sites follow: Asn-219 and Asn-224. A beta-D-glucoside is bound by residues Tyr-336 and Glu-406. Glu-406 acts as the Nucleophile in catalysis. The N-linked (GlcNAc...) asparagine glycan is linked to Asn-407. A beta-D-glucoside-binding residues include Trp-448 and Phe-465. Residue Asn-494 is glycosylated (N-linked (GlcNAc...) asparagine).

This sequence belongs to the glycosyl hydrolase 1 family.

It catalyses the reaction Hydrolysis of terminal, non-reducing beta-D-glucosyl residues with release of beta-D-glucose.. The chain is Beta-glucosidase 21 (BGLU21) from Oryza sativa subsp. japonica (Rice).